Consider the following 323-residue polypeptide: L-lactate dehydrogenase (323 aa).

The NAD(+) site is built by V12, D33, and Y65. Residues R94 and 126-129 (NPCD) each bind substrate. T149 is a binding site for NAD(+). 154-157 (ETMR) lines the substrate pocket. The Proton acceptor role is filled by H181. T234 contributes to the substrate binding site.

This sequence belongs to the LDH/MDH superfamily. LDH family. In terms of assembly, homotetramer.

It localises to the cytoplasm. It carries out the reaction (S)-lactate + NAD(+) = pyruvate + NADH + H(+). It functions in the pathway fermentation; pyruvate fermentation to lactate; (S)-lactate from pyruvate: step 1/1. Its function is as follows. Catalyzes the conversion of lactate to pyruvate. The polypeptide is L-lactate dehydrogenase (Mycoplasmoides gallisepticum (strain R(low / passage 15 / clone 2)) (Mycoplasma gallisepticum)).